Consider the following 152-residue polypeptide: Protein SprT-like (152 aa).

Residues 7–147 enclose the SprT-like domain; the sequence is QRLVEEVSLQ…CGKCKGKLKP (141 aa). A Zn(2+)-binding site is contributed by H67. E68 is a catalytic residue. Zn(2+) is bound at residue H71.

Belongs to the SprT family. It depends on Zn(2+) as a cofactor.

The protein resides in the cytoplasm. This Bacillus cereus (strain G9842) protein is Protein SprT-like.